A 269-amino-acid polypeptide reads, in one-letter code: Regulatory protein RecX (269 aa).

It belongs to the RecX family.

The protein localises to the cytoplasm. Its function is as follows. Modulates RecA activity. In Listeria monocytogenes serotype 4b (strain CLIP80459), this protein is Regulatory protein RecX.